Consider the following 411-residue polypeptide: Putative ion-transport protein YfeO (411 aa).

11 helical membrane passes run 9–29 (MLLL…VLIA), 54–74 (DSPF…GLII), 99–119 (ALPG…SLGP), 149–169 (ILAS…AALI), 186–206 (LFAP…FFHP), 223–243 (IASG…AVWC), 258–278 (VLIL…GGPL), 296–316 (LGAG…VIAA), 322–342 (GGRI…LHAH), 343–363 (VEAV…VLVV), and 386–406 (LLCI…LLAA).

The protein belongs to the chloride channel (TC 2.A.49) family.

The protein resides in the cell membrane. This Salmonella choleraesuis (strain SC-B67) protein is Putative ion-transport protein YfeO.